Consider the following 350-residue polypeptide: Protein RecA (350 aa).

68–75 serves as a coordination point for ATP; that stretch reads GPESSGKT.

Belongs to the RecA family.

Its subcellular location is the cytoplasm. Its function is as follows. Can catalyze the hydrolysis of ATP in the presence of single-stranded DNA, the ATP-dependent uptake of single-stranded DNA by duplex DNA, and the ATP-dependent hybridization of homologous single-stranded DNAs. It interacts with LexA causing its activation and leading to its autocatalytic cleavage. The sequence is that of Protein RecA from Symbiobacterium thermophilum (strain DSM 24528 / JCM 14929 / IAM 14863 / T).